The chain runs to 175 residues: uncharacterized protein (175 aa).

The protein resides in the cytoplasm. Its subcellular location is the nucleus. This is an uncharacterized protein from Schizosaccharomyces pombe (strain 972 / ATCC 24843) (Fission yeast).